Reading from the N-terminus, the 761-residue chain is DNA topoisomerase 1 (761 aa).

One can recognise a Toprim domain in the interval 6-143; sequence TALIICEKPS…KRMRFSSLTK (138 aa). Mg(2+) contacts are provided by Glu-12 and Asp-111. One can recognise a Topo IA-type catalytic domain in the interval 157–569; sequence DYGLVDAGES…EAEKRLRKIL (413 aa). Positions 196–201 are interaction with DNA; the sequence is SVGRVQ. Tyr-315 functions as the O-(5'-phospho-DNA)-tyrosine intermediate in the catalytic mechanism. C4-type zinc fingers lie at residues 600–626, 680–706, and 721–747; these read CPKC…YPEC and CPKC…YPKC.

Belongs to the type IA topoisomerase family. In terms of assembly, monomer. Mg(2+) is required as a cofactor.

The enzyme catalyses ATP-independent breakage of single-stranded DNA, followed by passage and rejoining.. Releases the supercoiling and torsional tension of DNA, which is introduced during the DNA replication and transcription, by transiently cleaving and rejoining one strand of the DNA duplex. Introduces a single-strand break via transesterification at a target site in duplex DNA. The scissile phosphodiester is attacked by the catalytic tyrosine of the enzyme, resulting in the formation of a DNA-(5'-phosphotyrosyl)-enzyme intermediate and the expulsion of a 3'-OH DNA strand. The free DNA strand then undergoes passage around the unbroken strand, thus removing DNA supercoils. Finally, in the religation step, the DNA 3'-OH attacks the covalent intermediate to expel the active-site tyrosine and restore the DNA phosphodiester backbone. In Methanocaldococcus jannaschii (strain ATCC 43067 / DSM 2661 / JAL-1 / JCM 10045 / NBRC 100440) (Methanococcus jannaschii), this protein is DNA topoisomerase 1.